We begin with the raw amino-acid sequence, 414 residues long: Cyclin-B1-3 (414 aa).

It belongs to the cyclin family. Cyclin AB subfamily. Expressed in roots, stems and flowers.

This Arabidopsis thaliana (Mouse-ear cress) protein is Cyclin-B1-3 (CYCB1-3).